A 199-amino-acid polypeptide reads, in one-letter code: Large ribosomal subunit protein bL25 (199 aa).

It belongs to the bacterial ribosomal protein bL25 family. CTC subfamily. Part of the 50S ribosomal subunit; part of the 5S rRNA/L5/L18/L25 subcomplex. Contacts the 5S rRNA. Binds to the 5S rRNA independently of L5 and L18.

This is one of the proteins that binds to the 5S RNA in the ribosome where it forms part of the central protuberance. This Pelobacter propionicus (strain DSM 2379 / NBRC 103807 / OttBd1) protein is Large ribosomal subunit protein bL25.